The chain runs to 2387 residues: Paternally-expressed gene 3 protein (2387 aa).

Residues 44 to 126 enclose the SCAN box domain; it reads HQRFRNFLYV…ALLEDYEAMY (83 aa). 4 disordered regions span residues 127 to 194, 262 to 305, 321 to 371, and 392 to 423; these read EPED…RDLA, DGHS…ICEA, ARSS…AFGG, and RYHFDAEGQGPVHDPRGGARKRPFECGGEARR. Basic and acidic residues-rich tracts occupy residues 160-179, 291-305, 321-364, and 404-423; these read SERERRRGRSRDMESRDRWP, PETKKSAHRRGICEA, ARSS…ERGP, and HDPRGGARKRPFECGGEARR. Residues 451–473 form a C2H2-type 1 zinc finger; the sequence is YVCDECGRSFAVISEFVEHQIVH. The disordered stretch occupies residues 492 to 542; the sequence is SEAQSRPEGARRSEGAQAAGLAEHRGGQAQEHLRGSGDEEQDEPFLPSPTF. A compositionally biased stretch (basic and acidic residues) spans 513-528; that stretch reads AEHRGGQAQEHLRGSG. 2 C2H2-type zinc fingers span residues 555 to 577 and 610 to 632; these read YECKVCKETFLHSSALIEHQKIH and YECKVCGETFHHSAALREHQKTH. The C2H2-type 4; degenerate zinc finger occupies 668 to 690; sequence YDFREGGDAFGRSSDFMEHQKIH. 3 disordered regions span residues 704-747, 764-797, and 820-858; these read PLLH…EARG, FRPPRGLREDGEPSTYLSGLRDPPQKTPAWESPY, and DHLAGEGPSGWQRDGEASGPSSDGRQHQKARAKKKNIER. Over residues 711 to 720 the composition is skewed to polar residues; that stretch reads MPGSQKSHTI. Residues 846–856 show a composition bias toward basic residues; that stretch reads HQKARAKKKNI. A C2H2-type 5 zinc finger spans residues 884 to 906; it reads YECLECGEFFVRSSELAEHQKIH. 57 tandem repeats follow at residues 965 to 973, 974 to 982, 983 to 991, 1001 to 1009, 1010 to 1018, 1028 to 1036, 1046 to 1054, 1055 to 1063, 1073 to 1081, 1091 to 1099, 1109 to 1117, 1118 to 1126, 1136 to 1144, 1145 to 1153, 1154 to 1162, 1163 to 1171, 1172 to 1180, 1190 to 1198, 1199 to 1207, 1217 to 1225, 1235 to 1243, 1253 to 1261, 1280 to 1288, 1289 to 1297, 1298 to 1306, 1307 to 1315, 1316 to 1324, 1325 to 1333, 1334 to 1342, 1343 to 1351, 1352 to 1360, 1361 to 1369, 1370 to 1378, 1379 to 1387, 1388 to 1396, 1397 to 1405, 1406 to 1414, 1415 to 1423, 1424 to 1432, 1433 to 1441, 1442 to 1450, 1451 to 1459, 1460 to 1468, 1469 to 1477, 1478 to 1486, 1496 to 1504, 1505 to 1513, 1514 to 1522, 1523 to 1531, 1532 to 1540, 1541 to 1549, 1550 to 1558, 1559 to 1567, 1568 to 1576, 1577 to 1585, 1586 to 1594, and 1595 to 1603. Polar residues-rich tracts occupy residues 965-989 and 1001-1020; these read PAQTSYAVEPAQTSYAEEPAQTSYT and PAQTSCIEEPAQTSYTNPAA. The tract at residues 965–1603 is 37 X 9 AA repeat of P-A-Q-T-X-Y-X-X-E; that stretch reads PAQTSYAVEP…EPAQTSYSEE (639 aa). A disordered region spans residues 965–1651; the sequence is PAQTSYAVEP…RPDMPRNQPR (687 aa). The span at 1046 to 1079 shows a compositional bias: polar residues; the sequence is PAQTSCIEEPAQTSYTNPAAETSYTEEPAQTSYT. Polar residues-rich tracts occupy residues 1107–1178, 1190–1206, 1217–1242, 1251–1484, and 1496–1601; these read EEPS…TSYT, PAQTSCIEEPAQTNYTK, PAQTSYTDPAAETSYTEEPAQTNYTV, EEPS…TNYT, and PAQT…TSYS. The C2H2-type 6; degenerate zinc finger occupies 1859-1881; sequence NECKECGECFATVEDLGRHQKIY. The disordered stretch occupies residues 1900–1921; that stretch reads LGLDGSPEEELEEQEEPEEPED. Over residues 1905 to 1921 the composition is skewed to acidic residues; that stretch reads SPEEELEEQEEPEEPED. C2H2-type zinc fingers lie at residues 1924-1946, 1980-2002, 2040-2062, 2097-2119, and 2148-2170; these read YGCKDCGLGFADRADLRDHQKVH, YECPACGESFVHSSFLFEHQKVH, PQCQVCGQDFIHASVLSEHARGH, YECETCGESFPSQADLQEHMRVH, and YECKDCGKSFIHSTILTKHQKLH. The segment at 2059–2102 is disordered; the sequence is ARGHAGEGLPDQGQGGAGAAGPGPAPTEPQQDPGEEQRYECETC. Residues 2204-2322 form a disordered region; that stretch reads NVEAAEPEVE…DCGECGETFP (119 aa). Composition is skewed to acidic residues over residues 2208-2228 and 2257-2311; these read AEPEVEAAEPEVEAAEPEVEA and EQPD…EEPY. 2 C2H2-type zinc fingers span residues 2312–2334 and 2363–2385; these read YDCGECGETFPSGAAYAEHLTAH and FKCDVCGQLFSDRLSLARHQNTH.

Belongs to the krueppel C2H2-type zinc-finger protein family. Homodimer. Interacts with SIAH1A and SIAH2. Interacts with TRAF2. As to expression, expressed at high levels in the cerebellum and at moderate levels in the testis and ovary.

The protein localises to the nucleus. Its subcellular location is the cytoplasm. In terms of biological role, induces apoptosis in cooperation with SIAH1A. Acts as a mediator between p53/TP53 and BAX in a neuronal death pathway that is activated by DNA damage. Acts synergistically with TRAF2 and inhibits TNF induced apoptosis through activation of NF-kappa-B. This is Paternally-expressed gene 3 protein (PEG3) from Bos taurus (Bovine).